The primary structure comprises 100 residues: Large ribosomal subunit protein uL23 (100 aa).

It belongs to the universal ribosomal protein uL23 family. Part of the 50S ribosomal subunit. Contacts protein L29, and trigger factor when it is bound to the ribosome.

In terms of biological role, one of the early assembly proteins it binds 23S rRNA. One of the proteins that surrounds the polypeptide exit tunnel on the outside of the ribosome. Forms the main docking site for trigger factor binding to the ribosome. In Pseudothermotoga lettingae (strain ATCC BAA-301 / DSM 14385 / NBRC 107922 / TMO) (Thermotoga lettingae), this protein is Large ribosomal subunit protein uL23.